Here is a 611-residue protein sequence, read N- to C-terminus: Zinc metalloproteinase-disintegrin-like MTP9 (611 aa).

The first 20 residues, 1–20 (MIEVLLVTICFTVFPYQGSS), serve as a signal peptide directing secretion. The propeptide occupies 21 to 191 (IILESGNVND…DEPIEKISQL (171 aa)). One can recognise a Peptidase M12B domain in the interval 205-401 (KYIELYVVVD…VRPQCILNKP (197 aa)). Glu-208 is a binding site for Ca(2+). N-linked (GlcNAc...) asparagine glycosylation occurs at Asn-282. Asp-292 lines the Ca(2+) pocket. Disulfide bonds link Cys-316-Cys-396, Cys-356-Cys-380, and Cys-358-Cys-363. Residues His-341, His-345, and His-351 each contribute to the Zn(2+) site. Residues Cys-396, Asn-399, Asn-414, Phe-416, Glu-418, Glu-421, and Asp-424 each coordinate Ca(2+). In terms of domain architecture, Disintegrin spans 409 to 493 (PPVCGNYFVE…ECPTDSFQRN (85 aa)). Disulfide bonds link Cys-412/Cys-441, Cys-423/Cys-436, Cys-425/Cys-431, Cys-435/Cys-456, Cys-447/Cys-453, Cys-452/Cys-478, Cys-465/Cys-485, Cys-472/Cys-504, Cys-497/Cys-509, Cys-516/Cys-566, Cys-531/Cys-573, Cys-541/Cys-575, Cys-544/Cys-554, Cys-561/Cys-599, and Cys-593/Cys-604. The D/ECD-tripeptide signature appears at 471 to 473 (DCD). Residues Asp-473, Leu-474, Glu-476, and Asp-488 each contribute to the Ca(2+) site. N-linked (GlcNAc...) asparagine glycans are attached at residues Asn-548 and Asn-570.

Belongs to the venom metalloproteinase (M12B) family. P-III subfamily. In terms of assembly, monomer. The cofactor is Zn(2+). Expressed by the venom gland.

It localises to the secreted. Functionally, snake venom zinc metalloproteinase that may impair hemostasis in the prey. In Drysdalia coronoides (White-lipped snake), this protein is Zinc metalloproteinase-disintegrin-like MTP9.